We begin with the raw amino-acid sequence, 209 residues long: Large ribosomal subunit protein uL3 (209 aa).

Positions 112–122 (GTTRGHGTQGN) are enriched in polar residues. Residues 112–146 (GTTRGHGTQGNIKRWGQSRGPETHGSRYHRIPGSM) form a disordered region.

It belongs to the universal ribosomal protein uL3 family. As to quaternary structure, part of the 50S ribosomal subunit. Forms a cluster with proteins L14 and L19.

Functionally, one of the primary rRNA binding proteins, it binds directly near the 3'-end of the 23S rRNA, where it nucleates assembly of the 50S subunit. This is Large ribosomal subunit protein uL3 from Lactobacillus gasseri (strain ATCC 33323 / DSM 20243 / BCRC 14619 / CIP 102991 / JCM 1131 / KCTC 3163 / NCIMB 11718 / NCTC 13722 / AM63).